The chain runs to 496 residues: Glutamyl-tRNA(Gln) amidotransferase subunit A (496 aa).

Residues lysine 75 and serine 150 each act as charge relay system in the active site. Serine 174 acts as the Acyl-ester intermediate in catalysis.

The protein belongs to the amidase family. GatA subfamily. As to quaternary structure, heterotrimer of A, B and C subunits.

The enzyme catalyses L-glutamyl-tRNA(Gln) + L-glutamine + ATP + H2O = L-glutaminyl-tRNA(Gln) + L-glutamate + ADP + phosphate + H(+). Its function is as follows. Allows the formation of correctly charged Gln-tRNA(Gln) through the transamidation of misacylated Glu-tRNA(Gln) in organisms which lack glutaminyl-tRNA synthetase. The reaction takes place in the presence of glutamine and ATP through an activated gamma-phospho-Glu-tRNA(Gln). In Burkholderia ambifaria (strain ATCC BAA-244 / DSM 16087 / CCUG 44356 / LMG 19182 / AMMD) (Burkholderia cepacia (strain AMMD)), this protein is Glutamyl-tRNA(Gln) amidotransferase subunit A.